Reading from the N-terminus, the 34-residue chain is Photosystem II reaction center protein M (34 aa).

A helical transmembrane segment spans residues 5–25 (ILAFIATALFILVPTSFLLII).

The protein belongs to the PsbM family. In terms of assembly, PSII is composed of 1 copy each of membrane proteins PsbA, PsbB, PsbC, PsbD, PsbE, PsbF, PsbH, PsbI, PsbJ, PsbK, PsbL, PsbM, PsbT, PsbX, PsbY, PsbZ, Psb30/Ycf12, at least 3 peripheral proteins of the oxygen-evolving complex and a large number of cofactors. It forms dimeric complexes.

The protein localises to the plastid. It localises to the chloroplast thylakoid membrane. Its function is as follows. One of the components of the core complex of photosystem II (PSII). PSII is a light-driven water:plastoquinone oxidoreductase that uses light energy to abstract electrons from H(2)O, generating O(2) and a proton gradient subsequently used for ATP formation. It consists of a core antenna complex that captures photons, and an electron transfer chain that converts photonic excitation into a charge separation. This subunit is found at the monomer-monomer interface. This Triticum aestivum (Wheat) protein is Photosystem II reaction center protein M.